We begin with the raw amino-acid sequence, 739 residues long: Protein NPGR2 (739 aa).

Residues 32 to 71 (EQMRHREEEDKKSEVGVGRDYNGSSALSTAESENAKKLDN) are disordered. Residues 33–45 (QMRHREEEDKKSE) show a composition bias toward basic and acidic residues. Residues 53–63 (NGSSALSTAES) are compositionally biased toward polar residues. TPR repeat units lie at residues 90–127 (EEAR…KMKT), 162–195 (FEAI…VETS), 215–248 (TKAV…HWKL), 465–498 (PRVV…GAES), 500–533 (LEVW…TGKW), 536–569 (GKLL…LQVQ), 592–625 (LGTW…APYS), 626–659 (SVRY…DPMH), and 697–733 (HSAW…EETM).

As to quaternary structure, interacts with calmodulin in a calcium-dependent manner. As to expression, expressed in pollen, flowers and fruits.

The sequence is that of Protein NPGR2 from Arabidopsis thaliana (Mouse-ear cress).